The primary structure comprises 35 residues: Photosystem II reaction center protein T (35 aa).

Residues 3–23 traverse the membrane as a helical segment; that stretch reads ALVYTFLLVSTLGIIFFAIFF.

Belongs to the PsbT family. As to quaternary structure, PSII is composed of 1 copy each of membrane proteins PsbA, PsbB, PsbC, PsbD, PsbE, PsbF, PsbH, PsbI, PsbJ, PsbK, PsbL, PsbM, PsbT, PsbY, PsbZ, Psb30/Ycf12, at least 3 peripheral proteins of the oxygen-evolving complex and a large number of cofactors. It forms dimeric complexes.

The protein localises to the plastid. It is found in the chloroplast thylakoid membrane. Its function is as follows. Found at the monomer-monomer interface of the photosystem II (PS II) dimer, plays a role in assembly and dimerization of PSII. PSII is a light-driven water plastoquinone oxidoreductase, using light energy to abstract electrons from H(2)O, generating a proton gradient subsequently used for ATP formation. The protein is Photosystem II reaction center protein T of Nelumbo lutea (American lotus).